The following is a 210-amino-acid chain: HTH-type transcriptional regulator MtrR (210 aa).

Positions 9–69 (LKTKEHLMLA…ALFQRICDDI (61 aa)) constitute an HTH tetR-type domain. Positions 32 to 51 (SLNEIAQAAGVTRGALYWHF) form a DNA-binding region, H-T-H motif.

In terms of assembly, homodimer. Binds to DNA as a pair of dimers.

DNA binding is affected significantly by increasing the NaCl concentration. Its function is as follows. Controls the permeability of the cell envelope to hydrophobic compounds such as antibiotics and detergents. Represses transcription of the mtrCDE-encoded efflux pump by binding within the mtrCDE promoter. Also negatively regulates the expression of farR, by binding to its promoter region, leading indirectly to the positive regulation of expression of the farAB-encoded efflux pump. In Neisseria gonorrhoeae, this protein is HTH-type transcriptional regulator MtrR.